Reading from the N-terminus, the 390-residue chain is Succinyl-diaminopimelate desuccinylase (390 aa).

A Zn(2+)-binding site is contributed by H75. D77 is an active-site residue. D108 serves as a coordination point for Zn(2+). E141 acts as the Proton acceptor in catalysis. Residues E142, E170, and H359 each contribute to the Zn(2+) site.

Belongs to the peptidase M20A family. DapE subfamily. As to quaternary structure, homodimer. It depends on Zn(2+) as a cofactor. Co(2+) is required as a cofactor.

The catalysed reaction is N-succinyl-(2S,6S)-2,6-diaminopimelate + H2O = (2S,6S)-2,6-diaminopimelate + succinate. It functions in the pathway amino-acid biosynthesis; L-lysine biosynthesis via DAP pathway; LL-2,6-diaminopimelate from (S)-tetrahydrodipicolinate (succinylase route): step 3/3. In terms of biological role, catalyzes the hydrolysis of N-succinyl-L,L-diaminopimelic acid (SDAP), forming succinate and LL-2,6-diaminopimelate (DAP), an intermediate involved in the bacterial biosynthesis of lysine and meso-diaminopimelic acid, an essential component of bacterial cell walls. This Maricaulis maris (strain MCS10) (Caulobacter maris) protein is Succinyl-diaminopimelate desuccinylase.